Here is a 255-residue protein sequence, read N- to C-terminus: uncharacterized protein (255 aa).

Residues I13, R37, D55, N81, Y148, K152, V180, and T182 each contribute to the NADP(+) site. Catalysis depends on Y148, which acts as the Proton donor. The Lowers pKa of active site Tyr role is filled by K152.

Belongs to the short-chain dehydrogenases/reductases (SDR) family.

Functionally, involved in osmoadaptation. This is an uncharacterized protein from Emericella nidulans (strain FGSC A4 / ATCC 38163 / CBS 112.46 / NRRL 194 / M139) (Aspergillus nidulans).